We begin with the raw amino-acid sequence, 619 residues long: Dihydroxy-acid dehydratase (619 aa).

Asp-80 lines the Mg(2+) pocket. Cys-121 provides a ligand contact to [2Fe-2S] cluster. Mg(2+) is bound by residues Asp-122 and Lys-123. An N6-carboxylysine modification is found at Lys-123. Residue Cys-196 coordinates [2Fe-2S] cluster. Residue Glu-492 coordinates Mg(2+). Ser-518 acts as the Proton acceptor in catalysis.

It belongs to the IlvD/Edd family. In terms of assembly, homodimer. Requires [2Fe-2S] cluster as cofactor. It depends on Mg(2+) as a cofactor.

It catalyses the reaction (2R)-2,3-dihydroxy-3-methylbutanoate = 3-methyl-2-oxobutanoate + H2O. It carries out the reaction (2R,3R)-2,3-dihydroxy-3-methylpentanoate = (S)-3-methyl-2-oxopentanoate + H2O. It functions in the pathway amino-acid biosynthesis; L-isoleucine biosynthesis; L-isoleucine from 2-oxobutanoate: step 3/4. The protein operates within amino-acid biosynthesis; L-valine biosynthesis; L-valine from pyruvate: step 3/4. Functions in the biosynthesis of branched-chain amino acids. Catalyzes the dehydration of (2R,3R)-2,3-dihydroxy-3-methylpentanoate (2,3-dihydroxy-3-methylvalerate) into 2-oxo-3-methylpentanoate (2-oxo-3-methylvalerate) and of (2R)-2,3-dihydroxy-3-methylbutanoate (2,3-dihydroxyisovalerate) into 2-oxo-3-methylbutanoate (2-oxoisovalerate), the penultimate precursor to L-isoleucine and L-valine, respectively. This chain is Dihydroxy-acid dehydratase, found in Bifidobacterium adolescentis (strain ATCC 15703 / DSM 20083 / NCTC 11814 / E194a).